Reading from the N-terminus, the 230-residue chain is NADH dehydrogenase [ubiquinone] iron-sulfur protein 8, mitochondrial (230 aa).

The transit peptide at 1–42 (MAAILARKSLSALRSRQLVLAGQAWQQGANTSNGTLLGTRTF) directs the protein to the mitochondrion. 4Fe-4S ferredoxin-type domains follow at residues 122 to 151 (RRYP…IEAE) and 161 to 190 (TRYD…EGPN). Residues C131, C134, C137, C141, C170, C173, C176, and C180 each coordinate [4Fe-4S] cluster.

It belongs to the complex I 23 kDa subunit family. As to quaternary structure, complex I is composed of about 45 different subunits. This is a component of the iron-sulfur (IP) fragment of the enzyme. The cofactor is [4Fe-4S] cluster.

Its subcellular location is the mitochondrion. The enzyme catalyses a ubiquinone + NADH + 5 H(+)(in) = a ubiquinol + NAD(+) + 4 H(+)(out). Functionally, core subunit of the mitochondrial membrane respiratory chain NADH dehydrogenase (Complex I) that is believed to belong to the minimal assembly required for catalysis. Complex I functions in the transfer of electrons from NADH to the respiratory chain. The immediate electron acceptor for the enzyme is believed to be ubiquinone. May donate electrons to ubiquinone. The polypeptide is NADH dehydrogenase [ubiquinone] iron-sulfur protein 8, mitochondrial (Nicotiana tabacum (Common tobacco)).